A 1468-amino-acid chain; its full sequence is DNA-directed RNA polymerase subunit beta (1468 aa).

It belongs to the RNA polymerase beta chain family. In terms of assembly, the RNAP catalytic core consists of 2 alpha, 1 beta, 1 beta' and 1 omega subunit. When a sigma factor is associated with the core the holoenzyme is formed, which can initiate transcription.

It catalyses the reaction RNA(n) + a ribonucleoside 5'-triphosphate = RNA(n+1) + diphosphate. Its function is as follows. DNA-dependent RNA polymerase catalyzes the transcription of DNA into RNA using the four ribonucleoside triphosphates as substrates. In Aquifex aeolicus (strain VF5), this protein is DNA-directed RNA polymerase subunit beta.